The sequence spans 468 residues: MGGRREAIERELKKLRAEREELDGRIRLLESQLEAGPAGFNGAAAGKGVGDDACGGSGACQSRVGNEFAPDGSLPADMIYRYSRHLLLPDFGVEGQRKLSQSSILVVGAGGLGSPLALYLAACGVGRLGIVDGDDVELNNLHRQIIHKEAYVGQSKVKSAADACREINSSIKVVEYHHTLKPCNALEVARKYDIVVDATDNLPTRYMISDCCVLLNKPLVSGAALGLEGQLTVYHHNGSPCYRCLFPTPPPVAACQRCSDSGVLGVVPGVIGCLQALEAIKVATGVGEPLCGRMLLFDALSARIRVVKLRGSSPDCTHCGENSVFTEEDFQKFDYESFTQSPMSDKAAPSVNVLPESARITCREYKKLADDGEPHLLLDVRPAHHFQIASISPSHNIPLSMLEEKLPALEASLKEAGEGSALVVLCRRGNDSQRAVQLLREKGFTSAKDIIGGLQAWGRDVDPDFPVY.

ATP-binding positions include glycine 111, aspartate 132, 139-143, lysine 156, and 200-201; these read NNLHR and DN. Cysteine 241 and cysteine 244 together coordinate Zn(2+). Catalysis depends on cysteine 258, which acts as the Glycyl thioester intermediate; for adenylyltransferase activity. Residues cysteine 316 and cysteine 319 each contribute to the Zn(2+) site. The region spanning 371–466 is the Rhodanese domain; sequence DGEPHLLLDV…WGRDVDPDFP (96 aa). Cysteine 426 (cysteine persulfide intermediate; for sulfurtransferase activity) is an active-site residue.

This sequence in the N-terminal section; belongs to the HesA/MoeB/ThiF family. UBA4 subfamily. The cofactor is Zn(2+).

It is found in the cytoplasm. The catalysed reaction is [molybdopterin-synthase sulfur-carrier protein]-C-terminal Gly-Gly + ATP + H(+) = [molybdopterin-synthase sulfur-carrier protein]-C-terminal Gly-Gly-AMP + diphosphate. It carries out the reaction [molybdopterin-synthase sulfur-carrier protein]-C-terminal Gly-Gly-AMP + S-sulfanyl-L-cysteinyl-[cysteine desulfurase] + AH2 = [molybdopterin-synthase sulfur-carrier protein]-C-terminal-Gly-aminoethanethioate + L-cysteinyl-[cysteine desulfurase] + A + AMP + 2 H(+). The protein operates within tRNA modification; 5-methoxycarbonylmethyl-2-thiouridine-tRNA biosynthesis. Its pathway is cofactor biosynthesis; molybdopterin biosynthesis. Plays a central role in 2-thiolation of mcm(5)S(2)U at tRNA wobble positions of cytosolic tRNA(Lys), tRNA(Glu) and tRNA(Gln). Also essential during biosynthesis of the molybdenum cofactor. Acts by mediating the C-terminal thiocarboxylation of sulfur carriers URM1 and MOCS2A. Its N-terminus first activates URM1 and MOCS2A as acyl-adenylates (-COAMP), then the persulfide sulfur on the catalytic cysteine is transferred to URM1 and MOCS2A to form thiocarboxylation (-COSH) of their C-terminus. The reaction probably involves hydrogen sulfide that is generated from the persulfide intermediate and that acts as a nucleophile towards URM1 and MOCS2A. Subsequently, a transient disulfide bond is formed. Does not use thiosulfate as sulfur donor; NFS1 probably acting as a sulfur donor for thiocarboxylation reactions. The protein is Adenylyltransferase and sulfurtransferase MOCS3-1 of Zea mays (Maize).